Reading from the N-terminus, the 160-residue chain is Endoribonuclease YbeY (160 aa).

The Zn(2+) site is built by His-121, His-125, and His-131.

Belongs to the endoribonuclease YbeY family. It depends on Zn(2+) as a cofactor.

It is found in the cytoplasm. In terms of biological role, single strand-specific metallo-endoribonuclease involved in late-stage 70S ribosome quality control and in maturation of the 3' terminus of the 16S rRNA. The chain is Endoribonuclease YbeY from Syntrophus aciditrophicus (strain SB).